Here is a 197-residue protein sequence, read N- to C-terminus: MSASRFIKCVTVGDGAVGKTCLLISYTSNTFPTDYVPTVFDNFSANVVVNGATVNLGLWDTAGQEDYNRLRPLSYRGADVFILAFSLISKASYENVSKKWIPELKHYAPGVPIVLVGTKLDLRDDKQFFIDHPGAVPITTAQGEELKKLIGAPAYIECSSKTQENVKGVFDAAIRVVLQPPKQKKKKSKAQKACSIL.

13-20 (GDGAVGKT) serves as a coordination point for GTP. Positions 35–43 (YVPTVFDNF) match the Effector region motif. GTP-binding positions include 60 to 64 (DTAGQ) and 118 to 121 (TKLD). Cys194 carries the cysteine methyl ester modification. Cys194 carries the S-geranylgeranyl cysteine lipid modification. Positions 195-197 (SIL) are cleaved as a propeptide — removed in mature form.

This sequence belongs to the small GTPase superfamily. Rho family. Interacts with SPK1. As to expression, ubiquitous.

It is found in the cytoplasm. Its subcellular location is the membrane. Functionally, inactive GDP-bound Rho GTPases reside in the cytosol, are found in a complex with Rho GDP-dissociation inhibitors (Rho GDIs), and are released from the GDI protein in order to translocate to membranes upon activation. The chain is Rac-like GTP-binding protein ARAC1 (ARAC1) from Arabidopsis thaliana (Mouse-ear cress).